We begin with the raw amino-acid sequence, 336 residues long: UDP-N-acetylenolpyruvoylglucosamine reductase (336 aa).

One can recognise an FAD-binding PCMH-type domain in the interval 1-178 (MAHSLQTLHT…TTVHLALPKE (178 aa)). The active site involves R154. S222 functions as the Proton donor in the catalytic mechanism. The active site involves E318.

This sequence belongs to the MurB family. FAD is required as a cofactor.

It localises to the cytoplasm. The catalysed reaction is UDP-N-acetyl-alpha-D-muramate + NADP(+) = UDP-N-acetyl-3-O-(1-carboxyvinyl)-alpha-D-glucosamine + NADPH + H(+). Its pathway is cell wall biogenesis; peptidoglycan biosynthesis. Cell wall formation. The sequence is that of UDP-N-acetylenolpyruvoylglucosamine reductase from Pseudoalteromonas translucida (strain TAC 125).